Reading from the N-terminus, the 665-residue chain is MASEAPHASAPDCAPASSDIPQQDGGSTNGHGHDLKGHGFFALALGSVGVVFGDIGTSPLYAFKEALAAASHDGVTRSEIFGVVSLALWALILIVTIKYVVFIMRADNKGEGGVLSLMALAQHAMGKRTTLVFVLGVAGAALFYGDAVITPAMSVLSAVEGLRTIPALEHGVTNEVVLLIATVMLLGLFFIQSRGTASVGKLFGPVCAVWFGVMFSLGLMNLAANPGILMAISPYYAVEFLAEHGLTGFIVLGAVFLTVTGVEALTADMGHFGRWPIQAAWLFFVLPCLAMNYLGQGAFALTTLETAQAAGKAMPELNWFFEMAPEALRLPLVLLAGAATVIASQAVITGAFSLTQQAIQLGLLPRLDVRRTSETQSGQIFVPQLNTMLLLGVLAIMFTFQTSSALAHAYGLAVTGTMIVTTCMAFIVMRKLWKWSMPMALLFLVPFLALDITFLSANALRFFSGGWLPVLIGAALFTIMATWVRGSQILTDKTRRDSLPVADLMDILRARAPHRAPGTAIFLTSDPDMTPVALMHNLKHNKVLHERNVILTVRTAETPRVSEEERVKIEKVNDDFKKVVVNYGFMESPNIPKALAVCRKQGLKFDIMATSFFLGRRSIVPSANSGMPLWQDRLFIYLMRNAANPTDFFKIPPGRVVELGAQVTV.

A compositionally biased stretch (low complexity) spans 1–18 (MASEAPHASAPDCAPASS). A disordered region spans residues 1 to 31 (MASEAPHASAPDCAPASSDIPQQDGGSTNGH). Helical transmembrane passes span 40–60 (FFALALGSVGVVFGDIGTSPL), 83–103 (VVSLALWALILIVTIKYVVFI), 131–151 (LVFVLGVAGAALFYGDAVITP), 171–191 (GVTNEVVLLIATVMLLGLFFI), 202–222 (LFGPVCAVWFGVMFSLGLMNL), 245–265 (GLTGFIVLGAVFLTVTGVEAL), 281–301 (WLFFVLPCLAMNYLGQGAFAL), 332–352 (LVLLAGAATVIASQAVITGAF), 380–400 (IFVPQLNTMLLLGVLAIMFTF), 409–429 (AYGLAVTGTMIVTTCMAFIVM), 435–455 (WSMPMALLFLVPFLALDITFL), and 462–482 (FFSGGWLPVLIGAALFTIMAT).

It belongs to the HAK/KUP transporter (TC 2.A.72) family.

Its subcellular location is the cell inner membrane. The catalysed reaction is K(+)(in) + H(+)(in) = K(+)(out) + H(+)(out). Functionally, transport of potassium into the cell. Likely operates as a K(+):H(+) symporter. The polypeptide is Probable potassium transport system protein Kup (Caulobacter vibrioides (strain ATCC 19089 / CIP 103742 / CB 15) (Caulobacter crescentus)).